We begin with the raw amino-acid sequence, 345 residues long: UPF0228 protein MA_2656 (345 aa).

Belongs to the UPF0228 family.

This chain is UPF0228 protein MA_2656, found in Methanosarcina acetivorans (strain ATCC 35395 / DSM 2834 / JCM 12185 / C2A).